A 1484-amino-acid polypeptide reads, in one-letter code: Glutamate receptor ionotropic, NMDA 2B (1484 aa).

An N-terminal signal peptide occupies residues 1-26; that stretch reads MKPRAECCSPKFWLVLAVLAVSGSRA. Over 27–555 the chain is Extracellular; the sequence is RSQKSPPSIG…SPSAFLEPFS (529 aa). Asn74 is a glycosylation site (N-linked (GlcNAc...) asparagine). The cysteines at positions 86 and 321 are disulfide-linked. Positions 127 and 284 each coordinate Zn(2+). 4 N-linked (GlcNAc...) asparagine glycosylation sites follow: Asn341, Asn348, Asn444, and Asn491. 2 disulfides stabilise this stretch: Cys429–Cys456 and Cys436–Cys457. L-glutamate is bound by residues Thr514 and Arg519. Asn542 carries an N-linked (GlcNAc...) asparagine glycan. The chain crosses the membrane as a helical span at residues 556-576; sequence ADVWVMMFVMLLIVSAVAVFV. Topologically, residues 577–601 are cytoplasmic; it reads FEYFSPVGYNRCLADGREPGGPSFT. The segment at residues 602–613 is an intramembrane region (discontinuously helical); that stretch reads IGKAIWLLWGLV. The segment at 604 to 623 is pore-forming; sequence KAIWLLWGLVFNNSVPVQNP. Residues 614-627 lie on the Cytoplasmic side of the membrane; that stretch reads FNNSVPVQNPKGTT. The helical transmembrane segment at 628–647 threads the bilayer; the sequence is SKIMVSVWAFFAVIFLASYT. At 648 to 819 the chain is on the extracellular side; the sequence is ANLAAFMIQE…SSQLDIDNMA (172 aa). N-linked (GlcNAc...) asparagine glycosylation occurs at Asn688. L-glutamate is bound by residues 690-691 and Asp732; that span reads ST. Residues 820 to 835 form a helical membrane-spanning segment; that stretch reads GVFYMLGAAMALSLIT. At 836–1484 the chain is on the cytoplasmic side; the sequence is FICEHLFYWQ…EKLSSIESDV (649 aa). Ser882, Ser886, Ser917, and Ser920 each carry phosphoserine. A phosphotyrosine mark is found at Tyr962 and Tyr1039. 3 positions are modified to phosphoserine: Ser1058, Ser1061, and Ser1064. Positions 1074-1097 are disordered; the sequence is EGNAAKRRKQQYKDSLKKRPASAK. Phosphotyrosine is present on residues Tyr1109 and Tyr1133. Ser1143 carries the phosphoserine modification. Tyr1155 is subject to Phosphotyrosine. A disordered region spans residues 1161 to 1194; the sequence is DFKRDSVSGGGPCTNRSHIKHGTGDKHGVVSGVP. 2 positions are modified to phosphoserine: Ser1255 and Ser1259. The segment at 1271–1301 is disordered; it reads AVTSNASTTKYPQSPTNSKAQKKNRNKLRRQ. A compositionally biased stretch (polar residues) spans 1272-1289; that stretch reads VTSNASTTKYPQSPTNSK. Residues 1290–1301 show a composition bias toward basic residues; the sequence is AQKKNRNKLRRQ. An interaction with DAPK1 region spans residues 1292–1304; the sequence is KKNRNKLRRQHSY. The residue at position 1303 (Ser1303) is a Phosphoserine; by DAPK1. Tyr1474 bears the Phosphotyrosine mark. The PDZ-binding signature appears at 1482–1484; sequence SDV.

It belongs to the glutamate-gated ion channel (TC 1.A.10.1) family. NR2B/GRIN2B subfamily. As to quaternary structure, heterotetramer. Forms heterotetrameric channels composed of two GluN1/zeta subunits (GRIN1), and two identical GluN2/epsilon subunits (GRIN2A, GRIN2B, GRIN2C or GRIN2D) or GluN3 subunits (GRIN3A or GRIN3B) (in vitro). Can also form heterotetrameric channels that contain at least two GluN1 subunits and at least two different GluN2 subunits (or a combination of one GluN2 and one GluN3 subunits) (in vitro). In vivo, the subunit composition may depend on the expression levels of the different subunits. Found in a complex with GRIN1 and GRIN3B. Found in a complex with GRIN1, GRIN3A and PPP2CB. Interacts with PDZ domains of PATJ, DLG3 and DLG4. Interacts with HIP1 and NETO1. Interacts with MAGI3. Interacts with DAPK1. Found in a complex with GRIN1 and PRR7. Interacts with PRR7. Interacts with CAMK2A. Interacts with ARC; preventing ARC oligomerization. Interacts with TMEM25. Interacts (via the extreme C-terminus) with FRMPD2 (via the second PDZ domain); the interaction is direct and is likely to promote NMDAR-mediated neural signal transmission. Interacts with FAM81A; the interaction facilitates condensate formation via liquid-liquid phase separation. In terms of processing, phosphorylated on tyrosine residues. Phosphorylation at Ser-1303 by DAPK1 enhances synaptic NMDA receptor channel activity. As to expression, primarily found in the fronto-parieto-temporal cortex and hippocampus pyramidal cells, lower expression in the basal ganglia.

The protein resides in the cell membrane. It localises to the postsynaptic cell membrane. The protein localises to the cell projection. It is found in the dendrite. Its subcellular location is the late endosome. The protein resides in the lysosome. It localises to the cytoplasm. The protein localises to the cytoskeleton. The catalysed reaction is Ca(2+)(in) = Ca(2+)(out). It carries out the reaction Na(+)(in) = Na(+)(out). It catalyses the reaction K(+)(in) = K(+)(out). Its function is as follows. Component of N-methyl-D-aspartate (NMDA) receptors (NMDARs) that function as heterotetrameric, ligand-gated cation channels with high calcium permeability and voltage-dependent block by Mg(2+). Participates in synaptic plasticity for learning and memory formation by contributing to the long-term depression (LTD) of hippocampus membrane currents. Channel activation requires binding of the neurotransmitter L-glutamate to the GluN2 subunit, glycine or D-serine binding to the GluN1 subunit, plus membrane depolarization to eliminate channel inhibition by Mg(2+). NMDARs mediate simultaneously the potasium efflux and the influx of calcium and sodium. Each GluN2 subunit confers differential attributes to channel properties, including activation, deactivation and desensitization kinetics, pH sensitivity, Ca2(+) permeability, and binding to allosteric modulators. In concert with DAPK1 at extrasynaptic sites, acts as a central mediator for stroke damage. Its phosphorylation at Ser-1303 by DAPK1 enhances synaptic NMDA receptor channel activity inducing injurious Ca2+ influx through them, resulting in an irreversible neuronal death. This is Glutamate receptor ionotropic, NMDA 2B from Homo sapiens (Human).